We begin with the raw amino-acid sequence, 276 residues long: Bis(5'-nucleosyl)-tetraphosphatase, symmetrical (276 aa).

It belongs to the Ap4A hydrolase family.

The catalysed reaction is P(1),P(4)-bis(5'-adenosyl) tetraphosphate + H2O = 2 ADP + 2 H(+). Hydrolyzes diadenosine 5',5'''-P1,P4-tetraphosphate to yield ADP. The sequence is that of Bis(5'-nucleosyl)-tetraphosphatase, symmetrical from Mannheimia succiniciproducens (strain KCTC 0769BP / MBEL55E).